The primary structure comprises 193 residues: Ion-translocating oxidoreductase complex subunit B (193 aa).

The interval 1-26 (MSTMLIAVILLTLLALFFGVLLGFAA) is hydrophobic. The 59-residue stretch at 32–90 (EGNPIVDELEAILPQTQCGQCGYPGCRPYAEAIANGDKVNKCPPGGTATMEKLASLMGV) folds into the 4Fe-4S domain. The [4Fe-4S] cluster site is built by cysteine 49, cysteine 52, cysteine 57, cysteine 73, cysteine 114, cysteine 117, cysteine 120, cysteine 124, cysteine 144, cysteine 147, cysteine 150, and cysteine 154. 4Fe-4S ferredoxin-type domains lie at 105-134 (KVAY…GAGK) and 136-164 (MHTV…MLPV).

Belongs to the 4Fe4S bacterial-type ferredoxin family. RnfB subfamily. The complex is composed of six subunits: RnfA, RnfB, RnfC, RnfD, RnfE and RnfG. Requires [4Fe-4S] cluster as cofactor.

Its subcellular location is the cell inner membrane. Part of a membrane-bound complex that couples electron transfer with translocation of ions across the membrane. In Shewanella sp. (strain MR-4), this protein is Ion-translocating oxidoreductase complex subunit B.